Here is a 221-residue protein sequence, read N- to C-terminus: Iron-sulfur cluster repair protein YtfE (221 aa).

Belongs to the RIC family. YtfE subfamily. In terms of assembly, homodimer.

The protein localises to the cytoplasm. Functionally, di-iron-containing protein involved in the repair of iron-sulfur clusters damaged by oxidative and nitrosative stress conditions. The chain is Iron-sulfur cluster repair protein YtfE from Edwardsiella ictaluri (strain 93-146).